We begin with the raw amino-acid sequence, 294 residues long: Shikimate dehydrogenase (NADP(+)) (294 aa).

Shikimate-binding positions include serine 22 to serine 24 and serine 69. Lysine 73 (proton acceptor) is an active-site residue. Shikimate contacts are provided by asparagine 94 and aspartate 111. NADP(+)-binding positions include glycine 135–alanine 139 and leucine 236. Residue tyrosine 238 participates in shikimate binding. Position 260 (glycine 260) interacts with NADP(+).

It belongs to the shikimate dehydrogenase family. In terms of assembly, homodimer.

It catalyses the reaction shikimate + NADP(+) = 3-dehydroshikimate + NADPH + H(+). Its pathway is metabolic intermediate biosynthesis; chorismate biosynthesis; chorismate from D-erythrose 4-phosphate and phosphoenolpyruvate: step 4/7. Involved in the biosynthesis of the chorismate, which leads to the biosynthesis of aromatic amino acids. Catalyzes the reversible NADPH linked reduction of 3-dehydroshikimate (DHSA) to yield shikimate (SA). This Streptococcus equi subsp. zooepidemicus (strain MGCS10565) protein is Shikimate dehydrogenase (NADP(+)).